The primary structure comprises 286 residues: Glycine--tRNA ligase alpha subunit (286 aa).

It belongs to the class-II aminoacyl-tRNA synthetase family. Tetramer of two alpha and two beta subunits.

The protein localises to the cytoplasm. The enzyme catalyses tRNA(Gly) + glycine + ATP = glycyl-tRNA(Gly) + AMP + diphosphate. This Thermotoga sp. (strain RQ2) protein is Glycine--tRNA ligase alpha subunit.